Consider the following 159-residue polypeptide: Phosphopantetheine adenylyltransferase (159 aa).

Substrate is bound at residue Thr9. ATP-binding positions include 9-10 and His17; that span reads TF. Residues Lys41, Leu73, and Arg87 each contribute to the substrate site. ATP contacts are provided by residues 88-90, Glu98, and 123-129; these read GLR and YSFISST.

It belongs to the bacterial CoaD family. As to quaternary structure, homohexamer. Mg(2+) is required as a cofactor.

Its subcellular location is the cytoplasm. It carries out the reaction (R)-4'-phosphopantetheine + ATP + H(+) = 3'-dephospho-CoA + diphosphate. The protein operates within cofactor biosynthesis; coenzyme A biosynthesis; CoA from (R)-pantothenate: step 4/5. Its function is as follows. Reversibly transfers an adenylyl group from ATP to 4'-phosphopantetheine, yielding dephospho-CoA (dPCoA) and pyrophosphate. This is Phosphopantetheine adenylyltransferase from Pseudomonas fluorescens (strain ATCC BAA-477 / NRRL B-23932 / Pf-5).